Here is a 131-residue protein sequence, read N- to C-terminus: Glycine cleavage system H protein (131 aa).

The Lipoyl-binding domain maps to 24-106 (IATIGISAFA…YGEGWLLKLR (83 aa)). N6-lipoyllysine is present on lysine 65.

The protein belongs to the GcvH family. In terms of assembly, the glycine cleavage system is composed of four proteins: P, T, L and H. (R)-lipoate is required as a cofactor.

In terms of biological role, the glycine cleavage system catalyzes the degradation of glycine. The H protein shuttles the methylamine group of glycine from the P protein to the T protein. The sequence is that of Glycine cleavage system H protein from Gloeothece citriformis (strain PCC 7424) (Cyanothece sp. (strain PCC 7424)).